Consider the following 282-residue polypeptide: Bifunctional protein FolD (282 aa).

Residues 165–167 (NRS), serine 190, and isoleucine 231 contribute to the NADP(+) site.

Belongs to the tetrahydrofolate dehydrogenase/cyclohydrolase family. In terms of assembly, homodimer.

It catalyses the reaction (6R)-5,10-methylene-5,6,7,8-tetrahydrofolate + NADP(+) = (6R)-5,10-methenyltetrahydrofolate + NADPH. It carries out the reaction (6R)-5,10-methenyltetrahydrofolate + H2O = (6R)-10-formyltetrahydrofolate + H(+). Its pathway is one-carbon metabolism; tetrahydrofolate interconversion. Its function is as follows. Catalyzes the oxidation of 5,10-methylenetetrahydrofolate to 5,10-methenyltetrahydrofolate and then the hydrolysis of 5,10-methenyltetrahydrofolate to 10-formyltetrahydrofolate. The protein is Bifunctional protein FolD of Clostridium botulinum (strain Langeland / NCTC 10281 / Type F).